Consider the following 377-residue polypeptide: Peptidyl-prolyl cis-trans isomerase D (377 aa).

The PPIase cyclophilin-type domain maps to Tyr-11–Glu-178. TPR repeat units lie at residues Ala-220–Phe-253, Phe-273–Ala-306, and Ala-314–Asp-347.

Belongs to the cyclophilin-type PPIase family. PPIase D subfamily.

The protein localises to the cytoplasm. The catalysed reaction is [protein]-peptidylproline (omega=180) = [protein]-peptidylproline (omega=0). Functionally, PPIases accelerate the folding of proteins. It catalyzes the cis-trans isomerization of proline imidic peptide bonds in oligopeptides. The chain is Peptidyl-prolyl cis-trans isomerase D (cpr6) from Aspergillus fumigatus (strain ATCC MYA-4609 / CBS 101355 / FGSC A1100 / Af293) (Neosartorya fumigata).